We begin with the raw amino-acid sequence, 269 residues long: 3'(2'),5'-bisphosphate nucleotidase CysQ (269 aa).

Residues E69, D89, L91, D92, and D216 each coordinate Mg(2+). E69 provides a ligand contact to substrate. Substrate contacts are provided by residues 91–94 (LDGT) and D216.

The protein belongs to the inositol monophosphatase superfamily. CysQ family. Mg(2+) serves as cofactor.

The protein resides in the cell inner membrane. The catalysed reaction is adenosine 3',5'-bisphosphate + H2O = AMP + phosphate. Converts adenosine-3',5'-bisphosphate (PAP) to AMP. In Haemophilus influenzae (strain ATCC 51907 / DSM 11121 / KW20 / Rd), this protein is 3'(2'),5'-bisphosphate nucleotidase CysQ.